A 118-amino-acid polypeptide reads, in one-letter code: Large ribosomal subunit protein bL20 (118 aa).

Belongs to the bacterial ribosomal protein bL20 family.

Functionally, binds directly to 23S ribosomal RNA and is necessary for the in vitro assembly process of the 50S ribosomal subunit. It is not involved in the protein synthesizing functions of that subunit. The sequence is that of Large ribosomal subunit protein bL20 from Serratia proteamaculans (strain 568).